The following is a 539-amino-acid chain: Chaperonin GroEL (539 aa).

ATP-binding positions include 29–32, 86–90, G413, 477–479, and D493; these read TLGP, DGTTT, and NAA.

The protein belongs to the chaperonin (HSP60) family. Forms a cylinder of 14 subunits composed of two heptameric rings stacked back-to-back. Interacts with the co-chaperonin GroES.

Its subcellular location is the cytoplasm. The enzyme catalyses ATP + H2O + a folded polypeptide = ADP + phosphate + an unfolded polypeptide.. In terms of biological role, together with its co-chaperonin GroES, plays an essential role in assisting protein folding. The GroEL-GroES system forms a nano-cage that allows encapsulation of the non-native substrate proteins and provides a physical environment optimized to promote and accelerate protein folding. In Clavibacter michiganensis subsp. michiganensis (strain NCPPB 382), this protein is Chaperonin GroEL.